The following is a 155-amino-acid chain: Ribosome maturation factor RimP (155 aa).

Belongs to the RimP family.

The protein localises to the cytoplasm. Its function is as follows. Required for maturation of 30S ribosomal subunits. The sequence is that of Ribosome maturation factor RimP from Phocaeicola vulgatus (strain ATCC 8482 / DSM 1447 / JCM 5826 / CCUG 4940 / NBRC 14291 / NCTC 11154) (Bacteroides vulgatus).